The following is a 136-amino-acid chain: MSRPTIIINDLDAERIDILLEQPAYAGLPIADALNAELDRAQMCSPEEMPHDVVTMNSRVKFRNLSDGEVRVRTLVYPAKMTDSNTQLSVMAPVGAALLGLRVGDSIHWELPGGVATHLEVLELEYQPEAAGDYLL.

It belongs to the Rnk family. Interacts with the RNA polymerase.

May act as an anti-Gre factor. The chain is Regulator of nucleoside diphosphate kinase from Escherichia coli O6:H1 (strain CFT073 / ATCC 700928 / UPEC).